The primary structure comprises 315 residues: Porphobilinogen deaminase (315 aa).

C242 bears the S-(dipyrrolylmethanemethyl)cysteine mark.

The protein belongs to the HMBS family. As to quaternary structure, monomer. The cofactor is dipyrromethane.

It catalyses the reaction 4 porphobilinogen + H2O = hydroxymethylbilane + 4 NH4(+). It participates in porphyrin-containing compound metabolism; protoporphyrin-IX biosynthesis; coproporphyrinogen-III from 5-aminolevulinate: step 2/4. Functionally, tetrapolymerization of the monopyrrole PBG into the hydroxymethylbilane pre-uroporphyrinogen in several discrete steps. In Syntrophotalea carbinolica (strain DSM 2380 / NBRC 103641 / GraBd1) (Pelobacter carbinolicus), this protein is Porphobilinogen deaminase.